We begin with the raw amino-acid sequence, 991 residues long: Mediator of RNA polymerase II transcription subunit 5 (991 aa).

This sequence belongs to the Mediator complex subunit 5 family. In terms of assembly, component of the Mediator complex.

It localises to the nucleus. In terms of biological role, component of the Mediator complex, a coactivator involved in the regulated transcription of nearly all RNA polymerase II-dependent genes. Mediator functions as a bridge to convey information from gene-specific regulatory proteins to the basal RNA polymerase II transcription machinery. Mediator is recruited to promoters by direct interactions with regulatory proteins and serves as a scaffold for the assembly of a functional preinitiation complex with RNA polymerase II and the general transcription factors. In Yarrowia lipolytica (strain CLIB 122 / E 150) (Yeast), this protein is Mediator of RNA polymerase II transcription subunit 5 (NUT1).